The chain runs to 448 residues: SET domain-containing protein SmydA-8, isoform B (448 aa).

Residues 42–273 (PSWRVADSPI…AGAEITMSYA (232 aa)) enclose the SET domain.

This sequence belongs to the class V-like SAM-binding methyltransferase superfamily.

The chain is SET domain-containing protein SmydA-8, isoform B from Drosophila melanogaster (Fruit fly).